Here is a 194-residue protein sequence, read N- to C-terminus: Putative L,D-transpeptidase YciB (194 aa).

Residues 1–19 (MKLSLFIIAVLMPVILLSA) form the signal peptide. A lipid anchor (N-palmitoyl cysteine) is attached at Cys20. Cys20 carries the S-diacylglycerol cysteine lipid modification. One can recognise a L,D-TPase catalytic domain in the interval 68 to 194 (VWIDVNVKEQ…IPEHTKVVIS (127 aa)). The active-site Proton donor/acceptor is the His144. The active-site Nucleophile is Cys170.

This sequence belongs to the YkuD family.

The protein localises to the cell membrane. Its pathway is cell wall biogenesis; peptidoglycan biosynthesis. The sequence is that of Putative L,D-transpeptidase YciB (yciB) from Bacillus subtilis (strain 168).